An 88-amino-acid chain; its full sequence is Small muscular protein (88 aa).

The disordered stretch occupies residues 22-66 (MGAFRPGAGQPPRRKECTPEVEEGVPPTSDEEKKPIPGAKKLPGP).

This sequence belongs to the SMPX family. As to expression, preferentially and abundantly expressed in heart and skeletal muscle.

In terms of biological role, plays a role in the regulatory network through which muscle cells coordinate their structural and functional states during growth, adaptation, and repair. The protein is Small muscular protein (SMPX) of Homo sapiens (Human).